The primary structure comprises 134 residues: Small ribosomal subunit protein uS8 (134 aa).

Belongs to the universal ribosomal protein uS8 family. In terms of assembly, part of the 30S ribosomal subunit. Contacts proteins S5 and S12.

In terms of biological role, one of the primary rRNA binding proteins, it binds directly to 16S rRNA central domain where it helps coordinate assembly of the platform of the 30S subunit. The polypeptide is Small ribosomal subunit protein uS8 (Nitratiruptor sp. (strain SB155-2)).